A 236-amino-acid polypeptide reads, in one-letter code: Small ribosomal subunit protein uS2c (236 aa).

The protein belongs to the universal ribosomal protein uS2 family.

It is found in the plastid. Its subcellular location is the chloroplast. This is Small ribosomal subunit protein uS2c (rps2) from Chaetosphaeridium globosum (Charophycean green alga).